A 380-amino-acid chain; its full sequence is DNA-directed RNA polymerase subunit Rpo1C (380 aa).

This sequence belongs to the RNA polymerase beta' chain family. In terms of assembly, part of the RNA polymerase complex.

It localises to the cytoplasm. The catalysed reaction is RNA(n) + a ribonucleoside 5'-triphosphate = RNA(n+1) + diphosphate. Its function is as follows. DNA-dependent RNA polymerase (RNAP) catalyzes the transcription of DNA into RNA using the four ribonucleoside triphosphates as substrates. Forms part of the jaw domain. This is DNA-directed RNA polymerase subunit Rpo1C from Archaeoglobus fulgidus (strain ATCC 49558 / DSM 4304 / JCM 9628 / NBRC 100126 / VC-16).